The sequence spans 190 residues: Recombination protein RecR (190 aa).

The segment at 58–73 (CEQCGALSENELCEIC) adopts a C4-type zinc-finger fold. In terms of domain architecture, Toprim spans 81–167 (NILCIVESPK…TFSKIAQGIP (87 aa)).

The protein belongs to the RecR family.

In terms of biological role, may play a role in DNA repair. It seems to be involved in an RecBC-independent recombinational process of DNA repair. It may act with RecF and RecO. In Campylobacter jejuni subsp. doylei (strain ATCC BAA-1458 / RM4099 / 269.97), this protein is Recombination protein RecR.